Here is a 205-residue protein sequence, read N- to C-terminus: Small ribosomal subunit protein uS4 (205 aa).

Residues 19–45 form a disordered region; that stretch reads IWGRPKSPVNRREYGPGQHGQRRKGKL. Positions 94–157 constitute an S4 RNA-binding domain; it reads SRLDAVVYRA…KQLAIVLEAV (64 aa).

Belongs to the universal ribosomal protein uS4 family. Part of the 30S ribosomal subunit. Contacts protein S5. The interaction surface between S4 and S5 is involved in control of translational fidelity.

Its function is as follows. One of the primary rRNA binding proteins, it binds directly to 16S rRNA where it nucleates assembly of the body of the 30S subunit. Functionally, with S5 and S12 plays an important role in translational accuracy. This chain is Small ribosomal subunit protein uS4, found in Brucella suis biovar 1 (strain 1330).